The sequence spans 283 residues: Thymidylate synthase (283 aa).

DUMP is bound at residue R22. The active-site Nucleophile is the C160. DUMP-binding positions include 180–183 (RSCD), N191, and 221–223 (HIY). Position 183 (D183) interacts with (6R)-5,10-methylene-5,6,7,8-tetrahydrofolate. Residue S282 coordinates (6R)-5,10-methylene-5,6,7,8-tetrahydrofolate.

Belongs to the thymidylate synthase family. Bacterial-type ThyA subfamily. Homodimer.

It localises to the cytoplasm. The catalysed reaction is dUMP + (6R)-5,10-methylene-5,6,7,8-tetrahydrofolate = 7,8-dihydrofolate + dTMP. Its pathway is pyrimidine metabolism; dTTP biosynthesis. Functionally, catalyzes the reductive methylation of 2'-deoxyuridine-5'-monophosphate (dUMP) to 2'-deoxythymidine-5'-monophosphate (dTMP) while utilizing 5,10-methylenetetrahydrofolate (mTHF) as the methyl donor and reductant in the reaction, yielding dihydrofolate (DHF) as a by-product. This enzymatic reaction provides an intracellular de novo source of dTMP, an essential precursor for DNA biosynthesis. This chain is Thymidylate synthase, found in Histophilus somni (strain 129Pt) (Haemophilus somnus).